The sequence spans 1174 residues: Tyrosine-protein phosphatase non-receptor type 21 (1174 aa).

An FERM domain is found at 23-308 (LVARIQLLNN…ARHKFYRLNQ (286 aa)). The segment covering 396–423 (SAHSTNSLNNPQPYLQPSPMSSNPSITG) has biased composition (polar residues). A disordered region spans residues 396–445 (SAHSTNSLNNPQPYLQPSPMSSNPSITGSDVMRPDYLPSHRHSAVIPPSY). S577, S589, S590, S637, and S673 each carry phosphoserine. A disordered region spans residues 673-692 (SQPSVFTERTQREGPEEAEG). Over residues 681–692 (RTQREGPEEAEG) the composition is skewed to basic and acidic residues. S710 and S711 each carry phosphoserine. Disordered regions lie at residues 711–745 (SEEE…DPPG) and 769–806 (KRMM…TSGR). The segment covering 712 to 722 (EEEEDEDFEEE) has biased composition (acidic residues). Residues 796-805 (MSESDLTTSG) show a composition bias toward polar residues. A phosphoserine mark is found at S797, S799, and S804. The Tyrosine-protein phosphatase domain occupies 896–1167 (VFTEYERILK…TFVYRVLIQF (272 aa)). Substrate contacts are provided by residues E1067, 1108 to 1114 (CSAGVGR), and Q1152. The Phosphocysteine intermediate role is filled by C1108.

The protein belongs to the protein-tyrosine phosphatase family. Non-receptor class subfamily.

The protein resides in the cytoplasm. It localises to the cytoskeleton. The catalysed reaction is O-phospho-L-tyrosyl-[protein] + H2O = L-tyrosyl-[protein] + phosphate. The protein is Tyrosine-protein phosphatase non-receptor type 21 (PTPN21) of Homo sapiens (Human).